Reading from the N-terminus, the 997-residue chain is Chromosomal passenger complex protein bir1 (997 aa).

BIR repeat units follow at residues 25 to 99 (RLDT…PWAY) and 120 to 194 (REQT…VFFT). Residues Cys-163, Cys-166, His-183, and Cys-190 each contribute to the Zn(2+) site. 5 disordered regions span residues 217 to 329 (EDLT…FSKG), 370 to 527 (TVSD…ENDE), 682 to 701 (TRDVSSPVSDEKSENVNHEE), 755 to 782 (SPKLQSKNNQTVEAVNTETSDKLQEKEA), and 817 to 838 (RTSVQNGTRSVSKNTPEKETKV). The span at 240–252 (TLNFSPSRKNNLN) shows a compositional bias: polar residues. Residues 288-299 (PRRKNKSPKKSK) are compositionally biased toward basic residues. The segment covering 311–320 (SDEDEDDDDL) has biased composition (acidic residues). A compositionally biased stretch (polar residues) spans 370 to 392 (TVSDITGHQSVTDESDEQNNCMS). Low complexity predominate over residues 408–423 (SVVSKSKEISSSVSSV). The span at 426-451 (EQNHTEKQVAIETPEQQKVEKEDEHL) shows a compositional bias: basic and acidic residues. Polar residues-rich tracts occupy residues 463–476 (KQPISSKPSTSSPD) and 485–512 (RVSSSSFRDKILQTNFSPRSTIDSFSNI). Positions 756 to 772 (PKLQSKNNQTVEAVNTE) are enriched in polar residues. The segment covering 773-782 (TSDKLQEKEA) has biased composition (basic and acidic residues). A compositionally biased stretch (polar residues) spans 817–830 (RTSVQNGTRSVSKN).

Component of the CPC complex at least composed of ark1, bir1 and pic1. Interacts with the mitotic checkpoint complex (MCC) subunit mad3. Phosphorylated by ark1.

It localises to the nucleus. Its subcellular location is the cytoplasm. It is found in the cytoskeleton. The protein localises to the spindle. The protein resides in the chromosome. It localises to the centromere. Its function is as follows. Component of the chromosomal passenger complex (CPC), a complex that acts as a key regulator of chromosome segregation and cytokinesis. Has a role in chromosome segregation by recruiting condensin and ark1 kinase to appropriate sites as the cell progresses through mitosis. Ark1 activity depends upon bir1 function and phosphorylation. Ark1 with bir1 function is required for full-scale association with kinetochores and formation of a complex with mad3. In Schizosaccharomyces pombe (strain 972 / ATCC 24843) (Fission yeast), this protein is Chromosomal passenger complex protein bir1 (bir1).